A 1436-amino-acid chain; its full sequence is Gag-Pol polyprotein (1436 aa).

A lipid anchor (N-myristoyl glycine; by host) is attached at Gly2. Residues 7–31 (VLSGGKLDAWEKIRLRPGGKKKYRL) form an interaction with Gp41 region. The interval 8-43 (LSGGKLDAWEKIRLRPGGKKKYRLKHLVWASRELER) is interaction with host CALM1. The tract at residues 12 to 19 (KLDAWEKI) is interaction with host AP3D1. An interaction with membrane phosphatidylinositol 4,5-bisphosphate and RNA region spans residues 14–33 (DAWEKIRLRPGGKKKYRLKH). Positions 16–22 (WEKIRLR) match the Nuclear export signal motif. Residues 26–32 (KKKYRLK) carry the Nuclear localization signal motif. The tract at residues 73 to 77 (EELRS) is interaction with membrane phosphatidylinositol 4,5-bisphosphate. Positions 102 to 129 (EKMEEEQNKSKNKKAQQAAADAGNNSQV) are disordered. Positions 116 to 128 (AQQAAADAGNNSQ) are enriched in low complexity. Tyr133 carries the post-translational modification Phosphotyrosine; by host. The interaction with human PPIA/CYPA and NUP153 stretch occupies residues 190 to 228 (NTVGGHQAAMQMLKETINEEAAEWDRLHPVHAGPIAPGQ). The tract at residues 278-364 (YSPVSILDIR…GGPSHKARVL (87 aa)) is dimerization/Multimerization of capsid protein p24. 2 consecutive CCHC-type zinc fingers follow at residues 392 to 409 (IKCF…NCRA) and 413 to 430 (KGCW…DCTE). The interval 490–494 (PQITL) is dimerization of protease. The Peptidase A2 domain occupies 509–578 (KEALLDTGAD…TPVNIIGRNL (70 aa)). Residue Asp514 is the For protease activity; shared with dimeric partner of the active site. Dimerization of protease regions lie at residues 538-544 (GIGGFIK) and 577-589 (NLLT…LNFP). Residues 632-822 (EGKISRVGPE…PPFLWMGYEL (191 aa)) enclose the Reverse transcriptase domain. Residues Asp698, Asp773, and Asp774 each contribute to the Mg(2+) site. An RT 'primer grip' region spans residues 815 to 823 (FLWMGYELH). The Tryptophan repeat motif motif lies at 986–1002 (WETWWVEYWQATWIPEW). Residues 1022-1145 (IIGAETFYVD…VDKLVSQGIR (124 aa)) enclose the RNase H type-1 domain. Mg(2+)-binding residues include Asp1031, Glu1066, Asp1086, and Asp1137. The segment at 1151-1192 (DGIDKAQEEHEKYHNNWRAMASDFNLPPVVAKEIVASCDKCQ) adopts an Integrase-type zinc-finger fold. Zn(2+)-binding residues include His1160, His1164, Cys1188, and Cys1191. Residues 1202-1352 (VDCSPGIWQL…SAGERIIDII (151 aa)) enclose the Integrase catalytic domain. Mg(2+) is bound by residues Asp1212, Asp1264, and Glu1300. Positions 1371 to 1418 (FRVYYRDSRDPIWKGPAKLLWKGEGAVVIQDNSDIKVVPRRKVKIIRD) form a DNA-binding region, integrase-type.

In terms of assembly, homotrimer; further assembles as hexamers of trimers. Interacts with gp41 (via C-terminus). Interacts with host CALM1; this interaction induces a conformational change in the Matrix protein, triggering exposure of the myristate group. Interacts with host AP3D1; this interaction allows the polyprotein trafficking to multivesicular bodies during virus assembly. Part of the pre-integration complex (PIC) which is composed of viral genome, matrix protein, Vpr and integrase. As to quaternary structure, homodimer; the homodimer further multimerizes as homohexamers or homopentamers. Interacts with human PPIA/CYPA; This interaction stabilizes the capsid. Interacts with human NUP153. Interacts with host PDZD8; this interaction stabilizes the capsid. Interacts with monkey TRIM5; this interaction destabilizes the capsid. Homodimer, whose active site consists of two apposed aspartic acid residues. In terms of assembly, heterodimer of p66 RT and p51 RT (RT p66/p51). Heterodimerization of RT is essential for DNA polymerase activity. The overall folding of the subdomains is similar in p66 RT and p51 RT but the spatial arrangements of the subdomains are dramatically different. As to quaternary structure, homotetramer; may further associate as a homohexadecamer. Part of the pre-integration complex (PIC) which is composed of viral genome, matrix protein, Vpr and integrase. Interacts with human SMARCB1/INI1 and human PSIP1/LEDGF isoform 1. Interacts with human KPNA3; this interaction might play a role in nuclear import of the pre-integration complex. Interacts with human NUP153; this interaction might play a role in nuclear import of the pre-integration complex. Mg(2+) serves as cofactor. Specific enzymatic cleavages by the viral protease yield mature proteins. The protease is released by autocatalytic cleavage. The polyprotein is cleaved during and after budding, this process is termed maturation. Proteolytic cleavage of p66 RT removes the RNase H domain to yield the p51 RT subunit. Nucleocapsid protein p7 might be further cleaved after virus entry. Post-translationally, tyrosine phosphorylated presumably in the virion by a host kinase. Phosphorylation is apparently not a major regulator of membrane association. In terms of processing, phosphorylated possibly by host MAPK1; this phosphorylation is necessary for Pin1-mediated virion uncoating. Methylated by host PRMT6, impairing its function by reducing RNA annealing and the initiation of reverse transcription.

The protein localises to the host cell membrane. It localises to the host endosome. It is found in the host multivesicular body. Its subcellular location is the virion membrane. The protein resides in the host nucleus. The protein localises to the host cytoplasm. It localises to the virion. The catalysed reaction is Specific for a P1 residue that is hydrophobic, and P1' variable, but often Pro.. The enzyme catalyses Endohydrolysis of RNA in RNA/DNA hybrids. Three different cleavage modes: 1. sequence-specific internal cleavage of RNA. Human immunodeficiency virus type 1 and Moloney murine leukemia virus enzymes prefer to cleave the RNA strand one nucleotide away from the RNA-DNA junction. 2. RNA 5'-end directed cleavage 13-19 nucleotides from the RNA end. 3. DNA 3'-end directed cleavage 15-20 nucleotides away from the primer terminus.. It carries out the reaction 3'-end directed exonucleolytic cleavage of viral RNA-DNA hybrid.. It catalyses the reaction DNA(n) + a 2'-deoxyribonucleoside 5'-triphosphate = DNA(n+1) + diphosphate. With respect to regulation, protease: The viral protease is inhibited by many synthetic protease inhibitors (PIs), such as amprenavir, atazanavir, indinavir, loprinavir, nelfinavir, ritonavir and saquinavir. Use of protease inhibitors in tritherapy regimens permit more ambitious therapeutic strategies. Reverse transcriptase/ribonuclease H: RT can be inhibited either by nucleoside RT inhibitors (NRTIs) or by non nucleoside RT inhibitors (NNRTIs). NRTIs act as chain terminators, whereas NNRTIs inhibit DNA polymerization by binding a small hydrophobic pocket near the RT active site and inducing an allosteric change in this region. Classical NRTIs are abacavir, adefovir (PMEA), didanosine (ddI), lamivudine (3TC), stavudine (d4T), tenofovir (PMPA), zalcitabine (ddC), and zidovudine (AZT). Classical NNRTIs are atevirdine (BHAP U-87201E), delavirdine, efavirenz (DMP-266), emivirine (I-EBU), and nevirapine (BI-RG-587). The tritherapies used as a basic effective treatment of AIDS associate two NRTIs and one NNRTI. Mediates, with Gag polyprotein, the essential events in virion assembly, including binding the plasma membrane, making the protein-protein interactions necessary to create spherical particles, recruiting the viral Env proteins, and packaging the genomic RNA via direct interactions with the RNA packaging sequence (Psi). Gag-Pol polyprotein may regulate its own translation, by the binding genomic RNA in the 5'-UTR. At low concentration, the polyprotein would promote translation, whereas at high concentration, the polyprotein would encapsidate genomic RNA and then shut off translation. In terms of biological role, targets the polyprotein to the plasma membrane via a multipartite membrane-binding signal, that includes its myristoylated N-terminus. Matrix protein is part of the pre-integration complex. Implicated in the release from host cell mediated by Vpu. Binds to RNA. Its function is as follows. Forms the conical core that encapsulates the genomic RNA-nucleocapsid complex in the virion. Most core are conical, with only 7% tubular. The core is constituted by capsid protein hexamer subunits. The core is disassembled soon after virion entry. Host restriction factors such as TRIM5-alpha or TRIMCyp bind retroviral capsids and cause premature capsid disassembly, leading to blocks in reverse transcription. Capsid restriction by TRIM5 is one of the factors which restricts HIV-1 to the human species. Host PIN1 apparently facilitates the virion uncoating. On the other hand, interactions with PDZD8 or CYPA stabilize the capsid. Functionally, encapsulates and protects viral dimeric unspliced genomic RNA (gRNA). Binds these RNAs through its zinc fingers. Acts as a nucleic acid chaperone which is involved in rearangement of nucleic acid secondary structure during gRNA retrotranscription. Also facilitates template switch leading to recombination. As part of the polyprotein, participates in gRNA dimerization, packaging, tRNA incorporation and virion assembly. Aspartyl protease that mediates proteolytic cleavages of Gag and Gag-Pol polyproteins during or shortly after the release of the virion from the plasma membrane. Cleavages take place as an ordered, step-wise cascade to yield mature proteins. This process is called maturation. Displays maximal activity during the budding process just prior to particle release from the cell. Also cleaves Nef and Vif, probably concomitantly with viral structural proteins on maturation of virus particles. Hydrolyzes host EIF4GI and PABP1 in order to shut off the capped cellular mRNA translation. The resulting inhibition of cellular protein synthesis serves to ensure maximal viral gene expression and to evade host immune response. Also mediates cleavage of host YTHDF3. Mediates cleavage of host CARD8, thereby activating the CARD8 inflammasome, leading to the clearance of latent HIV-1 in patient CD4(+) T-cells after viral reactivation; in contrast, HIV-1 can evade CARD8-sensing when its protease remains inactive in infected cells prior to viral budding. In terms of biological role, multifunctional enzyme that converts the viral RNA genome into dsDNA in the cytoplasm, shortly after virus entry into the cell. This enzyme displays a DNA polymerase activity that can copy either DNA or RNA templates, and a ribonuclease H (RNase H) activity that cleaves the RNA strand of RNA-DNA heteroduplexes in a partially processive 3' to 5' endonucleasic mode. Conversion of viral genomic RNA into dsDNA requires many steps. A tRNA(3)-Lys binds to the primer-binding site (PBS) situated at the 5'-end of the viral RNA. RT uses the 3' end of the tRNA primer to perform a short round of RNA-dependent minus-strand DNA synthesis. The reading proceeds through the U5 region and ends after the repeated (R) region which is present at both ends of viral RNA. The portion of the RNA-DNA heteroduplex is digested by the RNase H, resulting in a ssDNA product attached to the tRNA primer. This ssDNA/tRNA hybridizes with the identical R region situated at the 3' end of viral RNA. This template exchange, known as minus-strand DNA strong stop transfer, can be either intra- or intermolecular. RT uses the 3' end of this newly synthesized short ssDNA to perform the RNA-dependent minus-strand DNA synthesis of the whole template. RNase H digests the RNA template except for two polypurine tracts (PPTs) situated at the 5'-end and near the center of the genome. It is not clear if both polymerase and RNase H activities are simultaneous. RNase H probably can proceed both in a polymerase-dependent (RNA cut into small fragments by the same RT performing DNA synthesis) and a polymerase-independent mode (cleavage of remaining RNA fragments by free RTs). Secondly, RT performs DNA-directed plus-strand DNA synthesis using the PPTs that have not been removed by RNase H as primers. PPTs and tRNA primers are then removed by RNase H. The 3' and 5' ssDNA PBS regions hybridize to form a circular dsDNA intermediate. Strand displacement synthesis by RT to the PBS and PPT ends produces a blunt ended, linear dsDNA copy of the viral genome that includes long terminal repeats (LTRs) at both ends. Its function is as follows. Catalyzes viral DNA integration into the host chromosome, by performing a series of DNA cutting and joining reactions. This enzyme activity takes place after virion entry into a cell and reverse transcription of the RNA genome in dsDNA. The first step in the integration process is 3' processing. This step requires a complex comprising the viral genome, matrix protein, Vpr and integrase. This complex is called the pre-integration complex (PIC). The integrase protein removes 2 nucleotides from each 3' end of the viral DNA, leaving recessed CA OH's at the 3' ends. In the second step, the PIC enters cell nucleus. This process is mediated through integrase and Vpr proteins, and allows the virus to infect a non dividing cell. This ability to enter the nucleus is specific of lentiviruses, other retroviruses cannot and rely on cell division to access cell chromosomes. In the third step, termed strand transfer, the integrase protein joins the previously processed 3' ends to the 5' ends of strands of target cellular DNA at the site of integration. The 5'-ends are produced by integrase-catalyzed staggered cuts, 5 bp apart. A Y-shaped, gapped, recombination intermediate results, with the 5'-ends of the viral DNA strands and the 3' ends of target DNA strands remaining unjoined, flanking a gap of 5 bp. The last step is viral DNA integration into host chromosome. This involves host DNA repair synthesis in which the 5 bp gaps between the unjoined strands are filled in and then ligated. Since this process occurs at both cuts flanking the HIV genome, a 5 bp duplication of host DNA is produced at the ends of HIV-1 integration. Alternatively, Integrase may catalyze the excision of viral DNA just after strand transfer, this is termed disintegration. The polypeptide is Gag-Pol polyprotein (gag-pol) (Homo sapiens (Human)).